We begin with the raw amino-acid sequence, 473 residues long: Lactate utilization protein B (473 aa).

4Fe-4S ferredoxin-type domains lie at 302–332 (GSEF…GHSY) and 351–380 (YDDY…LHDL). The [4Fe-4S] cluster site is built by C311, C314, C317, C321, C364, C367, and C371.

It belongs to the LutB/YkgF family.

Its function is as follows. Is involved in L-lactate degradation and allows cells to grow with lactate as the sole carbon source. Has probably a role as an electron transporter during oxidation of L-lactate. The chain is Lactate utilization protein B from Bacillus anthracis (strain A0248).